A 177-amino-acid chain; its full sequence is Large ribosomal subunit protein uL6 (177 aa).

The protein belongs to the universal ribosomal protein uL6 family. As to quaternary structure, part of the 50S ribosomal subunit.

Functionally, this protein binds to the 23S rRNA, and is important in its secondary structure. It is located near the subunit interface in the base of the L7/L12 stalk, and near the tRNA binding site of the peptidyltransferase center. This Colwellia psychrerythraea (strain 34H / ATCC BAA-681) (Vibrio psychroerythus) protein is Large ribosomal subunit protein uL6.